The sequence spans 338 residues: Alcohol dehydrogenase (338 aa).

Residues Cys38, His61, Glu62, Cys92, Cys95, Cys98, Cys106, and Cys148 each contribute to the Zn(2+) site.

Belongs to the zinc-containing alcohol dehydrogenase family. In terms of assembly, homotetramer. The cofactor is Zn(2+).

It catalyses the reaction a primary alcohol + NAD(+) = an aldehyde + NADH + H(+). The enzyme catalyses a secondary alcohol + NAD(+) = a ketone + NADH + H(+). The catalysed reaction is ethanol + NAD(+) = acetaldehyde + NADH + H(+). It carries out the reaction 1-propanol + NAD(+) = propanal + NADH + H(+). It catalyses the reaction butan-1-ol + NAD(+) = butanal + NADH + H(+). The enzyme catalyses propan-2-ol + NAD(+) = acetone + NADH + H(+). In terms of biological role, psychrophilic alcohol dehydrogenase that exhibits a wide range of substrate specificity, oxidizing mainly primary and secondary aliphatic alcohols, utilizing NAD(+) as a cosubstrate. In vitro, shows highest reaction rates for ethanol as a substrate and gradually decreases its reaction rates as the length and branching of the carbon chain of the alcohol substrates increase. To a lesser extent, is also able to reduce aldehydes and ketones. Do not catalyze the further oxidation of aldehydes to carboxylic acids. Cannot use NADP(+) instead of NAD(+). In Moraxella sp. (strain TAE123), this protein is Alcohol dehydrogenase.